We begin with the raw amino-acid sequence, 455 residues long: MRKIPNHGTLRMTKVAYPLGLCVGLFIYVAYIKWHRASAAQAFFTIAGAASGVRWTQQAFSSPDSATRGHEVFYGIMFDAGSTGTRIHVFQFARPPGETPTLTHETFKALKPGLSAYADDVEKSAQGIQELLNVAKQHIPYDFWKATPLVLKATAGLRLLPGEKAQKLLQKVKEVFKASPFLVGDDCVSIMNGTDEGVSAWITVNFLTGSLKTPGSSSVGMLDLGGGSTQITFLPRVEGTLQASPPGHLTALQMFNRTFKLYSYSYLGLGLMSARLAILGGVEGKPAEDDKELVSPCLSPRFRGKWEHAEVTYRISGQKAVGLYELCASRVSEVLRNKVHRTEEAQHVDFYAFSYYYDLAASFGLIDAEKGGSLVVGDFEIAAKYVCRTLETQPPSSPFACMDLTYISLLLHEFGFPGDKVLKLARKIDNVETSWALGAIFHYIDSLKRQKVPAL.

The Cytoplasmic segment spans residues 1 to 12 (MRKIPNHGTLRM). Residues 13-32 (TKVAYPLGLCVGLFIYVAYI) form a helical; Signal-anchor for type II membrane protein membrane-spanning segment. The Lumenal portion of the chain corresponds to 33 to 455 (KWHRASAAQA…SLKRQKVPAL (423 aa)). N192 carries an N-linked (GlcNAc...) asparagine glycan. The Proton acceptor role is filled by E196. N-linked (GlcNAc...) asparagine glycosylation is present at N256. 2 cysteine pairs are disulfide-bonded: C297-C327 and C387-C401.

The protein belongs to the GDA1/CD39 NTPase family. Ca(2+) is required as a cofactor. It depends on Mg(2+) as a cofactor. In terms of processing, might be cleaved at the N-terminus, retained in an intracellular membrane compartment and in addition be released into the extracellular medium. Post-translationally, N-glycosylated. Expressed in heart and brain.

Its subcellular location is the golgi apparatus membrane. The protein resides in the secreted. It is found in the cell membrane. The enzyme catalyses a ribonucleoside 5'-diphosphate + H2O = a ribonucleoside 5'-phosphate + phosphate + H(+). It catalyses the reaction IDP + H2O = IMP + phosphate + H(+). The catalysed reaction is GDP + H2O = GMP + phosphate + H(+). It carries out the reaction UDP + H2O = UMP + phosphate + H(+). Its function is as follows. Catalyzes the hydrolysis of nucleoside triphosphates and diphosphates in a calcium- or magnesium-dependent manner. Has a strong preference for nucleoside diphosphates, preferentially hydrolyzes GDP, IDP, and UDP, with slower hydrolysis of CDP, ITP, GTP, CTP, ADP, and UTP and virtually no hydrolysis of ATP. The membrane bound form might support glycosylation reactions in the Golgi apparatus and, when released from cells, might catalyze the hydrolysis of extracellular nucleotides. The protein is Ectonucleoside triphosphate diphosphohydrolase 6 (Entpd6) of Rattus norvegicus (Rat).